The primary structure comprises 273 residues: Large ribosomal subunit protein uL2 (273 aa).

2 disordered regions span residues 28–53 and 221–273; these read KPFA…TTRH and RGTA…RRSK. The span at 39-48 shows a compositional bias: low complexity; that stretch reads KSGGRNNNGR. Lys242 carries the post-translational modification N6-acetyllysine.

Belongs to the universal ribosomal protein uL2 family. As to quaternary structure, part of the 50S ribosomal subunit. Forms a bridge to the 30S subunit in the 70S ribosome.

Functionally, one of the primary rRNA binding proteins. Required for association of the 30S and 50S subunits to form the 70S ribosome, for tRNA binding and peptide bond formation. It has been suggested to have peptidyltransferase activity; this is somewhat controversial. Makes several contacts with the 16S rRNA in the 70S ribosome. The sequence is that of Large ribosomal subunit protein uL2 from Escherichia coli (strain SE11).